Consider the following 318-residue polypeptide: MLLTNILCLMMPILLAVAFLTLTERKILGHMQLRKGPNTVGPHGLLQPVADAVKLFTKEPLHPLTSSKLMFIIAPTLAFTLALSLWAPLPMPHPLINLNLSILFILAMSSLAVHSILWSGWASNSKYALIGALRAVAQTISYEVTLAIILLSIMLINGSFTLSTLTITQEQMWLILPTWPLAMMWFISTLAETNRTPFDLSEGESELVSGFNVEYAAGPFALFFMAEYTNIILMNALTATLFFGAFHNPLFPELHTINLTTKTLILVFLFLWIRASYPRFRYDQLMHLLWKNFLPLTLALCTWHMTMPISLAGIPPQT.

The next 8 membrane-spanning stretches (helical) occupy residues 2-22, 69-89, 102-122, 147-167, 172-192, 231-251, 253-273, and 294-314; these read LLTNILCLMMPILLAVAFLTL, LMFIIAPTLAFTLALSLWAPL, ILFILAMSSLAVHSILWSGWA, AIILLSIMLINGSFTLSTLTI, MWLILPTWPLAMMWFISTLAE, IILMNALTATLFFGAFHNPLF, ELHTINLTTKTLILVFLFLWI, and LPLTLALCTWHMTMPISLAGI.

This sequence belongs to the complex I subunit 1 family.

The protein resides in the mitochondrion inner membrane. The enzyme catalyses a ubiquinone + NADH + 5 H(+)(in) = a ubiquinol + NAD(+) + 4 H(+)(out). Core subunit of the mitochondrial membrane respiratory chain NADH dehydrogenase (Complex I) that is believed to belong to the minimal assembly required for catalysis. Complex I functions in the transfer of electrons from NADH to the respiratory chain. The immediate electron acceptor for the enzyme is believed to be ubiquinone. The chain is NADH-ubiquinone oxidoreductase chain 1 (MT-ND1) from Bradypus variegatus (Brown-throated three-fingered sloth).